The chain runs to 175 residues: RNA pyrophosphohydrolase (175 aa).

The Nudix hydrolase domain maps to 6-150; sequence GFRPNVGIVI…KREVYRRVMK (145 aa). The short motif at 38–59 is the Nudix box element; the sequence is GGVDDGETPEQAMYRELYEEIG.

It belongs to the Nudix hydrolase family. RppH subfamily. A divalent metal cation serves as cofactor.

Accelerates the degradation of transcripts by removing pyrophosphate from the 5'-end of triphosphorylated RNA, leading to a more labile monophosphorylated state that can stimulate subsequent ribonuclease cleavage. This Aeromonas hydrophila subsp. hydrophila (strain ATCC 7966 / DSM 30187 / BCRC 13018 / CCUG 14551 / JCM 1027 / KCTC 2358 / NCIMB 9240 / NCTC 8049) protein is RNA pyrophosphohydrolase.